Reading from the N-terminus, the 175-residue chain is Ribosome maturation factor RimM (175 aa).

The 75-residue stretch at E100 to W174 folds into the PRC barrel domain.

This sequence belongs to the RimM family. Binds ribosomal protein uS19.

The protein localises to the cytoplasm. Functionally, an accessory protein needed during the final step in the assembly of 30S ribosomal subunit, possibly for assembly of the head region. Essential for efficient processing of 16S rRNA. May be needed both before and after RbfA during the maturation of 16S rRNA. It has affinity for free ribosomal 30S subunits but not for 70S ribosomes. The protein is Ribosome maturation factor RimM of Buchnera aphidicola subsp. Schizaphis graminum (strain Sg).